Consider the following 235-residue polypeptide: Probable inactive serine protease 37 (235 aa).

The signal sequence occupies residues 1–19; sequence MKFIFYLSVLTGTFLFADS. Positions 20–233 constitute a Peptidase S1 domain; sequence SVQKEDPAPY…YVSWIENTAK (214 aa). Cystine bridges form between Cys40-Cys56, Cys131-Cys198, and Cys163-Cys177.

It belongs to the peptidase S1 family.

It localises to the cytoplasmic vesicle. Its subcellular location is the secretory vesicle. It is found in the acrosome. The protein resides in the secreted. Plays a role in male fertility. May have a role in sperm migration or binding to zona-intact eggs. Involved in the activation of the proacrosin/acrosin system. The protein is Probable inactive serine protease 37 of Macaca fascicularis (Crab-eating macaque).